The sequence spans 60 residues: Mastoparan-VT5 (60 aa).

An N-terminal signal peptide occupies residues 1–27 (MKNTILILFTAFIALLGFFGMIAEPLA). 4 AXPX repeats span residues 27 to 30 (ADPL), 31 to 34 (ADPL), 37 to 40 (ADPD), and 41 to 44 (ADPE). Positions 28-45 (DPLADPLPDADPDADPET) are excised as a propeptide.

It belongs to the MCD family. Mastoparan subfamily. As to expression, expressed by the venom gland.

The protein localises to the secreted. The synthetic peptide shows weak antimicrobial activities against a few Gram-positive bacteria (only 2 on the 11 strains tested) and the fungus C.albicans. Does not show activity against all the Gram-negative bacteria tested. Exhibits little hemolytic activity against washed human erythrocytes. The sequence is that of Mastoparan-VT5 from Vespa tropica (Greater banded hornet).